A 396-amino-acid polypeptide reads, in one-letter code: Glyceraldehyde-3-phosphate dehydrogenase GAPA1, chloroplastic (396 aa).

Residues 1 to 60 (MASVTFSVPKGFTEFSGLRSSSASLPFGKKLSSDEFVSIVSFQTSAMGSSGGYRKGVTEA) constitute a chloroplast transit peptide. Residues 71–72 (RI), Asp95, and Arg140 contribute to the NADP(+) site. D-glyceraldehyde 3-phosphate contacts are provided by residues 212-214 (SCT), Thr243, Arg258, 271-272 (TG), and Arg294. The Nucleophile role is filled by Cys213. Asn376 provides a ligand contact to NADP(+).

Belongs to the glyceraldehyde-3-phosphate dehydrogenase family. In terms of assembly, tetramer of either four A chains (GAPDH 2) or two A and two B chains (GAPDH 1). Expressed in leaves and stems.

The protein resides in the plastid. It is found in the chloroplast membrane. It localises to the chloroplast stroma. The enzyme catalyses D-glyceraldehyde 3-phosphate + phosphate + NADP(+) = (2R)-3-phospho-glyceroyl phosphate + NADPH + H(+). It participates in carbohydrate biosynthesis; Calvin cycle. Its function is as follows. Involved in the photosynthetic reductive pentose phosphate pathway (Calvin-Benson cycle). Catalyzes the reduction of 1,3-diphosphoglycerate by NADPH. The polypeptide is Glyceraldehyde-3-phosphate dehydrogenase GAPA1, chloroplastic (GAPA1) (Arabidopsis thaliana (Mouse-ear cress)).